The sequence spans 483 residues: Glutamyl-tRNA(Gln) amidotransferase subunit A (483 aa).

Catalysis depends on charge relay system residues lysine 77 and serine 152. Serine 176 functions as the Acyl-ester intermediate in the catalytic mechanism.

This sequence belongs to the amidase family. GatA subfamily. Heterotrimer of A, B and C subunits.

It carries out the reaction L-glutamyl-tRNA(Gln) + L-glutamine + ATP + H2O = L-glutaminyl-tRNA(Gln) + L-glutamate + ADP + phosphate + H(+). Allows the formation of correctly charged Gln-tRNA(Gln) through the transamidation of misacylated Glu-tRNA(Gln) in organisms which lack glutaminyl-tRNA synthetase. The reaction takes place in the presence of glutamine and ATP through an activated gamma-phospho-Glu-tRNA(Gln). The protein is Glutamyl-tRNA(Gln) amidotransferase subunit A of Listeria monocytogenes serovar 1/2a (strain ATCC BAA-679 / EGD-e).